Here is a 243-residue protein sequence, read N- to C-terminus: 3-deoxy-manno-octulosonate cytidylyltransferase (243 aa).

It belongs to the KdsB family.

Its subcellular location is the cytoplasm. The enzyme catalyses 3-deoxy-alpha-D-manno-oct-2-ulosonate + CTP = CMP-3-deoxy-beta-D-manno-octulosonate + diphosphate. Its pathway is nucleotide-sugar biosynthesis; CMP-3-deoxy-D-manno-octulosonate biosynthesis; CMP-3-deoxy-D-manno-octulosonate from 3-deoxy-D-manno-octulosonate and CTP: step 1/1. The protein operates within bacterial outer membrane biogenesis; lipopolysaccharide biosynthesis. In terms of biological role, activates KDO (a required 8-carbon sugar) for incorporation into bacterial lipopolysaccharide in Gram-negative bacteria. This chain is 3-deoxy-manno-octulosonate cytidylyltransferase, found in Helicobacter pylori (strain ATCC 700392 / 26695) (Campylobacter pylori).